A 728-amino-acid chain; its full sequence is Meiotic sister-chromatid recombination protein 3 (728 aa).

Disordered regions lie at residues Gln33–Gln171, Asn236–Glu261, Pro300–Ala335, Ser363–Asn403, Ser422–Gly454, Val495–Leu514, and Tyr561–Arg728. The segment covering Ser35–Ser46 has biased composition (low complexity). Positions Asp48 to Leu58 are enriched in polar residues. Residues Ser57 and Ser64 each carry the phosphoserine modification. Residues Ser80 to Ala93 are compositionally biased toward low complexity. Polar residues-rich tracts occupy residues Gln95–Gln106, Tyr118–Ala132, and Lys140–Gln171. 3 positions are modified to phosphoserine: Ser127, Ser151, and Ser155. A compositionally biased stretch (basic and acidic residues) spans His251–Glu261. The span at Ile309 to Pro326 shows a compositional bias: basic residues. At Ser363 the chain carries Phosphoserine. Polar residues-rich tracts occupy residues Ser363–Asn373 and Thr385–Asn403. Residues Glu590–Asn634 are compositionally biased toward polar residues. Over residues Val635–Thr646 the composition is skewed to low complexity. Phosphothreonine is present on Thr646. Composition is skewed to polar residues over residues Asn654–Gln668, Asp675–Leu684, and Met691–Pro708. Ser660 is modified (phosphoserine). The span at Lys711–Arg728 shows a compositional bias: basic residues.

It is found in the cell membrane. Functionally, may be involved in the control of meiotic sister-chromatid recombination. This is Meiotic sister-chromatid recombination protein 3 (MSC3) from Saccharomyces cerevisiae (strain ATCC 204508 / S288c) (Baker's yeast).